The chain runs to 177 residues: Large ribosomal subunit protein uL6 (177 aa).

Over residues 157–171 the composition is skewed to basic and acidic residues; it reads YKGKGVRYSDENVRR. A disordered region spans residues 157–177; it reads YKGKGVRYSDENVRRKEAKKK.

The protein belongs to the universal ribosomal protein uL6 family. As to quaternary structure, part of the 50S ribosomal subunit.

Its function is as follows. This protein binds to the 23S rRNA, and is important in its secondary structure. It is located near the subunit interface in the base of the L7/L12 stalk, and near the tRNA binding site of the peptidyltransferase center. This Pseudoalteromonas translucida (strain TAC 125) protein is Large ribosomal subunit protein uL6.